Consider the following 323-residue polypeptide: Glucokinase (323 aa).

8-13 provides a ligand contact to ATP; it reads GDVGGT.

This sequence belongs to the bacterial glucokinase family.

The protein resides in the cytoplasm. The enzyme catalyses D-glucose + ATP = D-glucose 6-phosphate + ADP + H(+). This chain is Glucokinase, found in Yersinia enterocolitica serotype O:8 / biotype 1B (strain NCTC 13174 / 8081).